The sequence spans 204 residues: Probable molybdenum cofactor guanylyltransferase (204 aa).

GTP contacts are provided by residues Leu10–Gly12, Lys22, Asp75, and Asp104. Asp104 lines the Mg(2+) pocket.

It belongs to the MobA family. It depends on Mg(2+) as a cofactor.

It localises to the cytoplasm. The enzyme catalyses Mo-molybdopterin + GTP + H(+) = Mo-molybdopterin guanine dinucleotide + diphosphate. Functionally, transfers a GMP moiety from GTP to Mo-molybdopterin (Mo-MPT) cofactor (Moco or molybdenum cofactor) to form Mo-molybdopterin guanine dinucleotide (Mo-MGD) cofactor. The chain is Probable molybdenum cofactor guanylyltransferase from Methanocaldococcus jannaschii (strain ATCC 43067 / DSM 2661 / JAL-1 / JCM 10045 / NBRC 100440) (Methanococcus jannaschii).